We begin with the raw amino-acid sequence, 376 residues long: N-acetyldiaminopimelate deacetylase (376 aa).

Residue Asp69 is part of the active site. The active-site Proton acceptor is the Glu128.

The protein belongs to the peptidase M20A family. N-acetyldiaminopimelate deacetylase subfamily.

The catalysed reaction is N-acetyl-(2S,6S)-2,6-diaminopimelate + H2O = (2S,6S)-2,6-diaminopimelate + acetate. The protein operates within amino-acid biosynthesis; L-lysine biosynthesis via DAP pathway; LL-2,6-diaminopimelate from (S)-tetrahydrodipicolinate (acetylase route): step 3/3. Functionally, catalyzes the conversion of N-acetyl-diaminopimelate to diaminopimelate and acetate. In Bacillus cereus (strain ATCC 14579 / DSM 31 / CCUG 7414 / JCM 2152 / NBRC 15305 / NCIMB 9373 / NCTC 2599 / NRRL B-3711), this protein is N-acetyldiaminopimelate deacetylase.